Reading from the N-terminus, the 251-residue chain is uncharacterized protein (251 aa).

It is found in the mitochondrion. This is an uncharacterized protein from Arabidopsis thaliana (Mouse-ear cress).